Reading from the N-terminus, the 311-residue chain is 4-hydroxy-tetrahydrodipicolinate synthase (311 aa).

Pyruvate is bound at residue threonine 49. Tyrosine 138 functions as the Proton donor/acceptor in the catalytic mechanism. Lysine 166 (schiff-base intermediate with substrate) is an active-site residue. Valine 207 serves as a coordination point for pyruvate.

The protein belongs to the DapA family. Homotetramer; dimer of dimers.

It is found in the cytoplasm. It carries out the reaction L-aspartate 4-semialdehyde + pyruvate = (2S,4S)-4-hydroxy-2,3,4,5-tetrahydrodipicolinate + H2O + H(+). Its pathway is amino-acid biosynthesis; L-lysine biosynthesis via DAP pathway; (S)-tetrahydrodipicolinate from L-aspartate: step 3/4. Functionally, catalyzes the condensation of (S)-aspartate-beta-semialdehyde [(S)-ASA] and pyruvate to 4-hydroxy-tetrahydrodipicolinate (HTPA). The chain is 4-hydroxy-tetrahydrodipicolinate synthase from Lactobacillus helveticus (strain DPC 4571).